The primary structure comprises 338 residues: Nicotinate-nucleotide--dimethylbenzimidazole phosphoribosyltransferase (338 aa).

Glu306 (proton acceptor) is an active-site residue.

Belongs to the CobT family.

It catalyses the reaction 5,6-dimethylbenzimidazole + nicotinate beta-D-ribonucleotide = alpha-ribazole 5'-phosphate + nicotinate + H(+). It participates in nucleoside biosynthesis; alpha-ribazole biosynthesis; alpha-ribazole from 5,6-dimethylbenzimidazole: step 1/2. In terms of biological role, catalyzes the synthesis of alpha-ribazole-5'-phosphate from nicotinate mononucleotide (NAMN) and 5,6-dimethylbenzimidazole (DMB). In Cereibacter sphaeroides (strain ATCC 17025 / ATH 2.4.3) (Rhodobacter sphaeroides), this protein is Nicotinate-nucleotide--dimethylbenzimidazole phosphoribosyltransferase.